Consider the following 53-residue polypeptide: Conotoxin Cal6.31 (53 aa).

The first 24 residues, 1 to 24 (MKLTCVLIAAVLLLAVCQLDSADA), serve as a signal peptide directing secretion. Cystine bridges form between C29–C43, C36–C47, and C42–C51.

The protein belongs to the conotoxin O1 superfamily. As to expression, expressed by the venom duct.

It is found in the secreted. Probable neurotoxin. This Californiconus californicus (California cone) protein is Conotoxin Cal6.31.